Consider the following 418-residue polypeptide: Light-independent protochlorophyllide reductase subunit N (418 aa).

3 residues coordinate [4Fe-4S] cluster: cysteine 17, cysteine 42, and cysteine 103.

It belongs to the BchN/ChlN family. In terms of assembly, protochlorophyllide reductase is composed of three subunits; ChlL, ChlN and ChlB. Forms a heterotetramer of two ChlB and two ChlN subunits. [4Fe-4S] cluster is required as a cofactor.

The enzyme catalyses chlorophyllide a + oxidized 2[4Fe-4S]-[ferredoxin] + 2 ADP + 2 phosphate = protochlorophyllide a + reduced 2[4Fe-4S]-[ferredoxin] + 2 ATP + 2 H2O. The protein operates within porphyrin-containing compound metabolism; chlorophyll biosynthesis (light-independent). Component of the dark-operative protochlorophyllide reductase (DPOR) that uses Mg-ATP and reduced ferredoxin to reduce ring D of protochlorophyllide (Pchlide) to form chlorophyllide a (Chlide). This reaction is light-independent. The NB-protein (ChlN-ChlB) is the catalytic component of the complex. The chain is Light-independent protochlorophyllide reductase subunit N from Prochlorococcus marinus (strain MIT 9515).